A 551-amino-acid polypeptide reads, in one-letter code: Cleavage and polyadenylation specificity factor subunit 6 (551 aa).

Positions 1–213 (MADGVDHIDI…RGRFPGAVPG (213 aa)) are necessary for interaction with NXF1. The region spanning 81-161 (IALYIGNLTW…QNPVVTPCNK (81 aa)) is the RRM domain. The interval 81–161 (IALYIGNLTW…QNPVVTPCNK (81 aa)) is necessary for interaction with NUDT21/CPSF5. Residues 81–161 (IALYIGNLTW…QNPVVTPCNK (81 aa)) are necessary for nuclear paraspeckles localization. Thr157 carries the post-translational modification Phosphothreonine. Residues 169–180 (MQSRKTTQSGQM) show a composition bias toward polar residues. Disordered stretches follow at residues 169-411 (MQSR…PLSE) and 477-551 (LHGI…YRHR). Positions 202–206 (RGRGR) match the GAR motif. A compositionally biased stretch (low complexity) spans 207 to 219 (FPGAVPGGDRFPG). Composition is skewed to pro residues over residues 220–265 (PAGP…PLAG), 285–366 (GQPP…PPPT), and 377–388 (GPPPTDPYGRPP). Positions 389-404 (PYDRGDYGPPGREMDT) are enriched in basic and acidic residues. 2 positions are modified to phosphothreonine: Thr404 and Thr407. The tract at residues 404–551 (TARTPLSEAE…RDREREYRHR (148 aa)) is sufficient for nuclear speckle localization. The segment at 405-551 (ARTPLSEAEF…RDREREYRHR (147 aa)) is necessary for RNA-binding. The interval 481–551 (ESKSYGSGSR…RDREREYRHR (71 aa)) is necessary for interaction with SRSF3, SRSF7 and TRA2B/SFRS10. The segment covering 489-503 (SRRERSRERDHSRSR) has biased composition (basic and acidic residues). The segment at 490–551 (RRERSRERDH…RDREREYRHR (62 aa)) is arg/Ser-rich domain. Residues Ser494, Ser500, Ser511, Ser513, and Ser525 each carry the phosphoserine modification. Basic residues predominate over residues 504–514 (EKSRRHKSRSR). The segment at 510–551 (KSRSRDRHDDYYRERSRERERHRDRDRDRDRERDREREYRHR) is sufficient for nuclear targeting. Basic and acidic residues predominate over residues 515–551 (DRHDDYYRERSRERERHRDRDRDRDRERDREREYRHR).

This sequence belongs to the RRM CPSF6/7 family. Component of the cleavage factor Im (CFIm) complex which is a heterotetramer composed of two subunits of NUDT21/CPSF5 and two subunits of CPSF6 or CPSF7 or a heterodimer of CPSF6 and CPSF7. The cleavage factor Im (CFIm) complex associates with the CPSF and CSTF complexes to promote the assembly of the core mRNA 3'-processing machinery. Associates with the exon junction complex (EJC). Associates with the 80S ribosome particle. Interacts (via the RRM domain) with NUDT21/CPSF5; this interaction is direct and enhances binding to RNA. Interacts (via Arg/Ser-rich domain) with FIP1L1 (preferentially via unphosphorylated form and Arg/Glu/Asp-rich domain); this interaction mediates, at least in part, the interaction between the CFIm and CPSF complexes and may be inhibited by CPSF6 hyper-phosphorylation. Interacts (via N-terminus) with NXF1; this interaction is direct. Interacts with SRSF3. Interacts with SRSF7. Interacts with SNRNP70. Interacts with TRA2B/SFRS10. Interacts with UPF1. Interacts with UPF3B. Interacts with VIRMA. Interacts (via Arg/Ser-rich domain) with TNPO3; promoting nuclear import of CPSF6 independently of its phosphorylation status. Interacts with YTHDC1. Post-translationally, phosphorylated. Phosphorylated in the Arg/Ser-rich domain by SRPK1, in vitro. In terms of processing, symmetrically dimethylated on arginine residues in the GAR motif by PRMT5 in a WDR77- and CLNS1A-dependent manner. Asymmetrically dimethylated on arginine residues in the GAR motif by PRMT1.

The protein localises to the nucleus. Its subcellular location is the nucleoplasm. It localises to the nucleus speckle. It is found in the cytoplasm. Functionally, component of the cleavage factor Im (CFIm) complex that functions as an activator of the pre-mRNA 3'-end cleavage and polyadenylation processing required for the maturation of pre-mRNA into functional mRNAs. CFIm contributes to the recruitment of multiprotein complexes on specific sequences on the pre-mRNA 3'-end, so called cleavage and polyadenylation signals (pA signals). Most pre-mRNAs contain multiple pA signals, resulting in alternative cleavage and polyadenylation (APA) producing mRNAs with variable 3'-end formation. The CFIm complex acts as a key regulator of cleavage and polyadenylation site choice during APA through its binding to 5'-UGUA-3' elements localized in the 3'-untranslated region (UTR) for a huge number of pre-mRNAs. CPSF6 enhances NUDT21/CPSF5 binding to 5'-UGUA-3' elements localized upstream of pA signals and promotes RNA looping, and hence activates directly the mRNA 3'-processing machinery. Plays a role in mRNA export. The protein is Cleavage and polyadenylation specificity factor subunit 6 of Bos taurus (Bovine).